A 522-amino-acid chain; its full sequence is Occludin (522 aa).

A disordered region spans residues 1-20 (MSSRPLESPPPYRPDEFKPN). The Cytoplasmic portion of the chain corresponds to 1–66 (MSSRPLESPP…KWTSPPGVIR (66 aa)). Residues 60 to 269 (SPPGVIRILS…IIFFAVKTRR (210 aa)) enclose the MARVEL domain. A helical membrane pass occupies residues 67-89 (ILSMLIIVMCIAIFACVASTLAW). Topologically, residues 90 to 135 (DRGYGTSLLGGSVGYPYGGSGFGSYGSGYGYGYGYGYGYGGYTDPR) are extracellular. A helical membrane pass occupies residues 136–160 (AAKGFMLAMAAFCFIAALVIFVTSV). The Cytoplasmic portion of the chain corresponds to 161 to 170 (IRSEMSRTRR). Residues 171-195 (YYLSVIIVSAILGIMVFIATIVYIM) form a helical membrane-spanning segment. Residues 196–243 (GVNPTAQSSGSLYGSQIYALCNQFYTPAATGLYVDQYLYHYCVVDPQE) are Extracellular-facing. A disulfide bond links cysteine 216 and cysteine 237. A helical transmembrane segment spans residues 244-265 (AIAIVLGFMIIVAFALIIFFAV). Residues 266–522 (KTRRKMDRYD…MVGDYDRQKT (257 aa)) are Cytoplasmic-facing. At serine 302 the chain carries Phosphoserine. Threonine 305 bears the Phosphothreonine mark. Residues serine 313, serine 321, and serine 340 each carry the phosphoserine modification. Residues 360 to 407 (VDDFRQPRYSSGGNFETPSKRAPAKGRAGRSKRTEQDHYETDYTTGGE) are disordered. Residues 367–376 (RYSSGGNFET) show a composition bias toward polar residues. Tyrosine 368 carries the phosphotyrosine modification. Phosphoserine occurs at positions 369 and 370. Residues 381–390 (APAKGRAGRS) are compositionally biased toward basic residues. Residues 391 to 400 (KRTEQDHYET) show a composition bias toward basic and acidic residues. Residues tyrosine 398 and tyrosine 402 each carry the phosphotyrosine modification. Threonine 403 and threonine 404 each carry phosphothreonine; by PKC/PRKCH. Residue serine 408 is modified to Phosphoserine. The OCEL domain occupies 414-522 (EDWIREYPPI…MVGDYDRQKT (109 aa)). Residues 426-489 (DQQRQLYKRN…EYNRLKQVKG (64 aa)) are a coiled coil. Serine 490 is modified (phosphoserine).

The protein belongs to the ELL/occludin family. As to quaternary structure, interacts with TJP1/ZO1. Interacts with VAPA. Interacts with CLDN1, CLDN6, CLDN9, CLDN11, CLDN12 and CLDN17. Interacts with PLSCR1. Interacts with LSR, ILDR1 and ILDR2. Interacts with TJP2/ZO2. Dephosphorylated by PTPRJ. The tyrosine phosphorylation on Tyr-398 and Tyr-402 reduces its ability to interact with TJP1. Phosphorylation at Ser-490 also attenuates the interaction with TJP1. In terms of processing, (Microbial infection) Cleaved by S.pyogenes SpeB protease; leading to its degradation. Degradation by SpeB promotes bacterial translocation across the host epithelial barrier. In terms of tissue distribution, localized at tight junctions of both epithelial and endothelial cells. Highly expressed in kidney. Not detected in testis.

The protein localises to the cell membrane. Its subcellular location is the cell junction. It is found in the tight junction. Functionally, may play a role in the formation and regulation of the tight junction (TJ) paracellular permeability barrier. It is able to induce adhesion when expressed in cells lacking tight junctions. In terms of biological role, (Microbial infection) Acts as a coreceptor for hepatitis C virus (HCV) in hepatocytes. In Homo sapiens (Human), this protein is Occludin (OCLN).